The sequence spans 355 residues: MTGSAEYSARRVLPDAPLLAAATGRTPSRRPVWFMRQAGRSLPEYREIRAGIGMLESCFDPALVCEITMQPVRRHDVDAAILFSDIVVPLKAAGIDLDIVAGVGPVVANPIRSIADVAALPRLVPEEVGAIAQAVRLLTTELGSTPLIGFAGAPFTLASYLVEGGPSRNHEKTKALMHSDPKTWHALLGSLADTTICFLQTQLKAGVDAVQLFDSWAGALSLADYREFVLPHSERVFAEVAAAGVPRIHFGVGTGELLGAMGEAGADVVGVDWRIPLDVAAGRVGPGKALQGNLDPAVLFAGPEVIDREVRRIAAEGDRAIEAGAIGHIFNLGHGVLPDTDPTAITSAVELVHSL.

Substrate-binding positions include 36-40 (RQAGR), D85, Y160, S215, and H334.

This sequence belongs to the uroporphyrinogen decarboxylase family. In terms of assembly, homodimer.

The protein resides in the cytoplasm. It carries out the reaction uroporphyrinogen III + 4 H(+) = coproporphyrinogen III + 4 CO2. The protein operates within porphyrin-containing compound metabolism; protoporphyrin-IX biosynthesis; coproporphyrinogen-III from 5-aminolevulinate: step 4/4. Its function is as follows. Catalyzes the decarboxylation of four acetate groups of uroporphyrinogen-III to yield coproporphyrinogen-III. This Rhodococcus erythropolis (strain PR4 / NBRC 100887) protein is Uroporphyrinogen decarboxylase.